Here is a 777-residue protein sequence, read N- to C-terminus: Dynamin-like protein ARC5 (777 aa).

Residues 45-343 (PFEAPAVLVV…LWKRYKESVP (299 aa)) form the Dynamin-type G domain. Residues 55 to 62 (GQQTDGKS) are G1 motif. Residue 55 to 62 (GQQTDGKS) coordinates GTP. Residues 81–83 (KTR) form a G2 motif region. The interval 160–163 (DTPG) is G3 motif. Residues 160–164 (DTPGL) and 231–234 (TKLD) each bind GTP. The segment at 231-234 (TKLD) is G4 motif. Residues 265–268 (SPFF) form a G5 motif region. 2 coiled-coil regions span residues 300–320 (EDIASLEKKLGRLLTKQEKSR) and 728–765 (NLRQSLDQKKRSTEIELRRIKRIKEKFRVMNEKLNSHE).

The protein belongs to the TRAFAC class dynamin-like GTPase superfamily. Dynamin/Fzo/YdjA family. Forms a homodimer and heterodimers with DRP3A and DRP3B on peroxisomes. Also interacts with FIS1A (but not FIS1B) and PEX11 proteins (PEX11A, PEX11B, PEX11C, PEX11D and PEX11E) on peroxisomes. Interacts with PDV1 and PDV2. Post-translationally, stabilized at the plastid outer envelope membranes (OEMs) in the constriction site when in complex with GTP, but destabilized after conversion of GTP into GDP leading to turnover with a cytosolic pool.

It localises to the cytoplasm. It is found in the plastid. The protein resides in the chloroplast outer membrane. Its subcellular location is the peroxisome. The protein localises to the cytosol. It catalyses the reaction GTP + H2O = GDP + phosphate + H(+). GTPase activity is repressed by PDV2 thus increasing stability at the plastid outer envelope membranes (OEMs) periphery. Mechanochemical GTPase component of both plastid and peroxisome division machinery. Required for the last steps of plastid division specifically in mesophyll-cell, when the narrow isthmus breaks, facilitating the separation of the daughter plastids. Necessary for peroxisome activities. Seems to influence stromule (stroma-filled tubular extensions of the plastid envelope membrane) length and frequency. The chain is Dynamin-like protein ARC5 from Arabidopsis thaliana (Mouse-ear cress).